Reading from the N-terminus, the 441-residue chain is Probable xylan O-acetyltransferase 10 (441 aa).

Residues 1-19 are Cytoplasmic-facing; sequence MMKPQHGGMAGHGGGRTRS. The chain crosses the membrane as a helical; Signal-anchor for type II membrane protein span at residues 20 to 40; it reads PFLTSYALTLAFITFVSVLYF. The Lumenal portion of the chain corresponds to 41-441; sequence KDFSSTLHQP…ELLYSKLFFP (401 aa). The segment at 50–81 is disordered; the sequence is PFLTRPPPHRRQIARPRAPSHHHGGGSSSGGG. Residues 56 to 73 show a composition bias toward basic residues; sequence PPHRRQIARPRAPSHHHG. Intrachain disulfides connect cysteine 97–cysteine 148, cysteine 119–cysteine 184, cysteine 128–cysteine 422, and cysteine 341–cysteine 418. A glycan (N-linked (GlcNAc...) asparagine) is linked at asparagine 154. A GDS motif motif is present at residues 171–173; the sequence is GDS. The active-site Nucleophile is serine 173. N-linked (GlcNAc...) asparagine glycosylation is found at asparagine 212, asparagine 343, and asparagine 381. Catalysis depends on aspartate 417, which acts as the Proton donor. Residues 417–420 carry the DXXH motif motif; sequence DCTH. Histidine 420 (proton acceptor) is an active-site residue.

It belongs to the PC-esterase family. TBL subfamily. In terms of tissue distribution, expressed in roots, leaves and stems.

It localises to the golgi apparatus membrane. Functionally, probable xylan acetyltransferase required for 2-O- and 3-O-monoacetylation of xylosyl residues in xylan. Possesses extremely low activity in vitro. The chain is Probable xylan O-acetyltransferase 10 from Oryza sativa subsp. japonica (Rice).